The chain runs to 102 residues: Large ribosomal subunit protein uL24 (102 aa).

Belongs to the universal ribosomal protein uL24 family. In terms of assembly, part of the 50S ribosomal subunit.

One of two assembly initiator proteins, it binds directly to the 5'-end of the 23S rRNA, where it nucleates assembly of the 50S subunit. Its function is as follows. One of the proteins that surrounds the polypeptide exit tunnel on the outside of the subunit. This chain is Large ribosomal subunit protein uL24, found in Leuconostoc citreum (strain KM20).